We begin with the raw amino-acid sequence, 334 residues long: Cell division protein ZipA (334 aa).

The Periplasmic segment spans residues 1–2 (ME). Residues 3-23 (LHIIFLILGGLLIVLLAGFSI) traverse the membrane as a helical segment. Over 24 to 334 (YSARREKSRI…DRQAYFARVS (311 aa)) the chain is Cytoplasmic.

Belongs to the ZipA family. As to quaternary structure, interacts with FtsZ via their C-terminal domains.

The protein localises to the cell inner membrane. In terms of biological role, essential cell division protein that stabilizes the FtsZ protofilaments by cross-linking them and that serves as a cytoplasmic membrane anchor for the Z ring. Also required for the recruitment to the septal ring of downstream cell division proteins. This Haemophilus ducreyi (strain 35000HP / ATCC 700724) protein is Cell division protein ZipA.